The chain runs to 610 residues: UvrABC system protein C (610 aa).

Residues 16 to 94 (SQPGVYRMYD…IKLYQPRYNV (79 aa)) enclose the GIY-YIG domain. In terms of domain architecture, UVR spans 204-239 (DQVLTQLIARMEKASQDLAFEEAARIRDQIQAVRRV).

The protein belongs to the UvrC family. Interacts with UvrB in an incision complex.

The protein localises to the cytoplasm. The UvrABC repair system catalyzes the recognition and processing of DNA lesions. UvrC both incises the 5' and 3' sides of the lesion. The N-terminal half is responsible for the 3' incision and the C-terminal half is responsible for the 5' incision. The polypeptide is UvrABC system protein C (Salmonella paratyphi A (strain ATCC 9150 / SARB42)).